The following is a 312-amino-acid chain: Epoxyqueuosine reductase (312 aa).

Catalysis depends on aspartate 132, which acts as the Proton donor. Residues glutamate 174–isoleucine 206 form the 4Fe-4S ferredoxin-type 1 domain. The [4Fe-4S] cluster site is built by cysteine 186, cysteine 189, cysteine 192, cysteine 196, cysteine 212, cysteine 240, cysteine 243, and cysteine 247. Residues proline 226–threonine 257 form the 4Fe-4S ferredoxin-type 2 domain.

The protein belongs to the QueG family. In terms of assembly, monomer. It depends on cob(II)alamin as a cofactor. [4Fe-4S] cluster serves as cofactor.

The protein resides in the cytoplasm. The catalysed reaction is epoxyqueuosine(34) in tRNA + AH2 = queuosine(34) in tRNA + A + H2O. The protein operates within tRNA modification; tRNA-queuosine biosynthesis. In terms of biological role, catalyzes the conversion of epoxyqueuosine (oQ) to queuosine (Q), which is a hypermodified base found in the wobble positions of tRNA(Asp), tRNA(Asn), tRNA(His) and tRNA(Tyr). This is Epoxyqueuosine reductase from Prochlorococcus marinus (strain NATL2A).